Consider the following 142-residue polypeptide: Hemoglobin subunit alpha-A (142 aa).

One can recognise a Globin domain in the interval 2–142; that stretch reads VLSAADKTNV…VGAVLTAKYR (141 aa). O2 is bound at residue His-59. Heme b is bound at residue His-88.

It belongs to the globin family. As to quaternary structure, heterotetramer of two alpha chains and two beta chains. As to expression, red blood cells.

Involved in oxygen transport from the lung to the various peripheral tissues. The chain is Hemoglobin subunit alpha-A (HBAA) from Anas platyrhynchos platyrhynchos (Northern mallard).